The primary structure comprises 321 residues: Low affinity immunoglobulin epsilon Fc receptor (321 aa).

Residues 1-21 (MEEGQYSEIEELPRRRCCRRG) are Cytoplasmic-facing. S-palmitoyl cysteine attachment occurs at residues Cys17 and Cys18. Residues 22-47 (TQIVLLGLVTAALWAGLLTLLLLWHW) form a helical; Signal-anchor for type II membrane protein membrane-spanning segment. Residues 48–321 (DTTQSLKQLE…LPTPSAPLHS (274 aa)) lie on the Extracellular side of the membrane. N-linked (GlcNAc...) asparagine glycosylation is present at Asn63. The segment at 66-85 (QVSKNLESHHGDQMAQKSQS) is disordered. 3 repeats span residues 69 to 89 (KNLESHHGDQMAQKSQSTQIS), 90 to 110 (QELEELRAEQQRLKSQDLELS), and 111 to 131 (WNLNGLQADLSSFKSQELNER). Cystine bridges form between Cys160-Cys288, Cys163-Cys174, Cys191-Cys282, and Cys259-Cys273. The C-type lectin domain maps to 162–284 (TCPEKWINFQ…RKLGAWVCDR (123 aa)). Glu249, Thr251, Asn269, and Asp270 together coordinate Ca(2+). Positions 290-321 (PPASEGSAESMGPDSRPDPDGRLPTPSAPLHS) are disordered. O-linked (Xyl...) (chondroitin sulfate) serine glycosylation is present at Ser296.

As to quaternary structure, homotrimer. Interacts (via C-type lectin domain) with IGHE (via CH3 region); this interaction regulates IgE homeostasis. Interacts (via the C-terminus) with CR2/CD21 (via Sushi domain 1 and 2). Post-translationally, N- and O-glycosylated. In terms of processing, the secreted form sCD23 is produced by ADAM10-mediated ectodomain shedding. In terms of tissue distribution, detected in urine (at protein level).

The protein localises to the cell membrane. Its subcellular location is the secreted. In terms of biological role, low-affinity receptor for immunoglobulin E (IgE) and CR2/CD21. Has essential roles in the regulation of IgE production and in the differentiation of B cells. On B cells, initiates IgE-dependent antigen uptake and presentation to T cells. On macrophages, upon IgE binding and antigen cross-linking induces intracellular killing of parasites through activation of L-Arginine-nitric oxide pathway. In Homo sapiens (Human), this protein is Low affinity immunoglobulin epsilon Fc receptor (FCER2).